A 67-amino-acid chain; its full sequence is Disintegrin EC3A (67 aa).

The 65-residue stretch at 1-65 (NSVHPCCDPV…DCPRNRYKGK (65 aa)) folds into the Disintegrin domain. Disulfide bonds link Cys6-Cys29, Cys20-Cys26, Cys25-Cys50, and Cys38-Cys57. The Cell attachment site; atypical (VGD) signature appears at 42 to 44 (VGD).

It belongs to the venom metalloproteinase (M12B) family. P-II subfamily. P-IIe sub-subfamily. As to quaternary structure, heterodimer with EC3B; disulfide-linked. Expressed by the venom gland.

It localises to the secreted. Inhibits adhesion of cells expressing alpha-4/beta-1 (ITGA4/ITGB1) and alpha-4/beta-7 (ITGA4/ITGB7) integrins to the natural ligands vascular cell adhesion molecule 1 (VCAM-1) and mucosal addressin cell adhesion molecule 1 (MADCAM-1). It is also a weaker inhibitor of alpha-5/beta-1 (ITGA5/ITGB1) and alpha-2b/beta-3 (ITGA2B/ITGB3) integrins. The inhibitory activity of EC3 towards alpha-4 integrins is associated with the MLD sequence of EC3B subunit. The ability of EC3 to inhibit ITGA5/ITGB1 resides in both subunits A and B. This chain is Disintegrin EC3A, found in Echis carinatus (Saw-scaled viper).